We begin with the raw amino-acid sequence, 488 residues long: IQ domain-containing protein IQM1 (488 aa).

Residues 20–46 (RTNSFKRDDTNRHQNSPKSTMERSLSF) form a disordered region. Positions 32–46 (HQNSPKSTMERSLSF) are enriched in polar residues. The IQ domain maps to 106 to 135 (LDAAATTLQKVYKSYRTRRNLADCAVVVEE). Disordered stretches follow at residues 377–403 (SFKS…EKEE) and 448–472 (SPRV…VRVS). Basic and acidic residues predominate over residues 388–403 (RKEVSEEVEIPSEKEE).

Interacts (via IQ domain) with CAM5. As to expression, highly expressed in leaf mesophyll cells. Expressed in roots, rosette and cauline leaves, stems, flowers and siliques.

It localises to the cytoplasm. It is found in the nucleus. Involved in the modulation of stomatal movement. Promotes stomatal opening. May play a role in the regulation of chitin signaling. May be involved in biotic and abiotic stress responses. The polypeptide is IQ domain-containing protein IQM1 (Arabidopsis thaliana (Mouse-ear cress)).